We begin with the raw amino-acid sequence, 289 residues long: Minor capsid protein P10 (289 aa).

The hydrophobic stretch occupies residues 1-21 (MMNFILVLLIVAMIGTILVSE).

Interacts with the major capsid protein.

It localises to the virion. Functionally, one of the minor capsid proteins that constitute a network internal to the major capsid proteins and outside the lipid membrane. The minor capsid proteins glue and stabilize the capsomers. In Chlorella (PBCV-1), this protein is Minor capsid protein P10.